The following is a 332-amino-acid chain: MKIKSALLTLVGALTVFSSSAHSKDLKIGLSIDDLRLERWQKDRDIFVNKAESMGAKVFVQSANGDDSAQISQIENMINKNIDVLVIIPHNGEVLSNVISEAKKEGIKVLAYDRLINNADLDFYVSFDNEKVGELQAKSIVAVKPEGNYFLMGGSPVDNNAKLFRKGQMKVLDPLIASGKIKVVGDQWVDSWLAEKALQIMENALTANKNNVDAVVASNDATAGGAIQALSAQGLSGKVAISGQDADLAAIKRIVNGSQTMTVYKPITKLADKAAEIAVELGKNEKIEANAELNNGLKNVPAYLLDPIAVDKRNINETVIKDGFHTKESIYH.

The N-terminal stretch at 1–23 is a signal peptide; the sequence is MKIKSALLTLVGALTVFSSSAHS.

It belongs to the bacterial solute-binding protein 2 family.

The protein resides in the periplasm. Involved in the high-affinity D-xylose membrane transport system. Binds with high affinity to xylose. The polypeptide is D-xylose-binding periplasmic protein (xylF) (Haemophilus influenzae (strain ATCC 51907 / DSM 11121 / KW20 / Rd)).